The following is a 480-amino-acid chain: UDP-N-acetylmuramoylalanine--D-glutamate ligase (480 aa).

110–116 is an ATP binding site; that stretch reads GTNGKST.

It belongs to the MurCDEF family.

The protein resides in the cytoplasm. The enzyme catalyses UDP-N-acetyl-alpha-D-muramoyl-L-alanine + D-glutamate + ATP = UDP-N-acetyl-alpha-D-muramoyl-L-alanyl-D-glutamate + ADP + phosphate + H(+). It participates in cell wall biogenesis; peptidoglycan biosynthesis. Its function is as follows. Cell wall formation. Catalyzes the addition of glutamate to the nucleotide precursor UDP-N-acetylmuramoyl-L-alanine (UMA). In Synechococcus sp. (strain JA-2-3B'a(2-13)) (Cyanobacteria bacterium Yellowstone B-Prime), this protein is UDP-N-acetylmuramoylalanine--D-glutamate ligase.